The chain runs to 631 residues: Dolichyl-diphosphooligosaccharide--protein glycosyltransferase subunit 2 (631 aa).

The N-terminal stretch at Met-1–Ala-22 is a signal peptide. Residues Leu-23–Val-540 lie on the Lumenal side of the membrane. Residue Asn-106 is glycosylated (N-linked (GlcNAc...) asparagine). A Glycyl lysine isopeptide (Lys-Gly) (interchain with G-Cter in ubiquitin) cross-link involves residue Lys-154. The chain crosses the membrane as a helical span at residues Val-541–Ile-561. Over Arg-562 to Thr-571 the chain is Cytoplasmic. Residues Phe-572–Val-592 form a helical membrane-spanning segment. The Lumenal segment spans residues Tyr-593–Gln-596. Residues Leu-597–Gly-617 traverse the membrane as a helical segment. Residues Asn-618–His-631 are Cytoplasmic-facing.

This sequence belongs to the SWP1 family. As to quaternary structure, component of the oligosaccharyltransferase (OST) complex. OST exists in two different complex forms which contain common core subunits RPN1, RPN2, OST48, OST4, DAD1 and TMEM258, either STT3A or STT3B as catalytic subunits, and form-specific accessory subunits. STT3A complex assembly occurs through the formation of 3 subcomplexes. Subcomplex 1 contains RPN1 and TMEM258, subcomplex 2 contains the STT3A-specific subunits STT3A, DC2/OSTC, and KCP2 as well as the core subunit OST4, and subcomplex 3 contains RPN2, DAD1, and OST48. The STT3A complex can form stable complexes with the Sec61 complex or with both the Sec61 and TRAP complexes. Interacts with DDI2. Interacts with TMEM35A/NACHO.

The protein localises to the endoplasmic reticulum. It localises to the endoplasmic reticulum membrane. It participates in protein modification; protein glycosylation. Functionally, subunit of the oligosaccharyl transferase (OST) complex that catalyzes the initial transfer of a defined glycan (Glc(3)Man(9)GlcNAc(2) in eukaryotes) from the lipid carrier dolichol-pyrophosphate to an asparagine residue within an Asn-X-Ser/Thr consensus motif in nascent polypeptide chains, the first step in protein N-glycosylation. N-glycosylation occurs cotranslationally and the complex associates with the Sec61 complex at the channel-forming translocon complex that mediates protein translocation across the endoplasmic reticulum (ER). All subunits are required for a maximal enzyme activity. The sequence is that of Dolichyl-diphosphooligosaccharide--protein glycosyltransferase subunit 2 from Bos taurus (Bovine).